Reading from the N-terminus, the 305-residue chain is Glycine--tRNA ligase alpha subunit (305 aa).

It belongs to the class-II aminoacyl-tRNA synthetase family. As to quaternary structure, tetramer of two alpha and two beta subunits.

The protein localises to the cytoplasm. The enzyme catalyses tRNA(Gly) + glycine + ATP = glycyl-tRNA(Gly) + AMP + diphosphate. In Vibrio campbellii (strain ATCC BAA-1116), this protein is Glycine--tRNA ligase alpha subunit.